The sequence spans 362 residues: Phospho-2-dehydro-3-deoxyheptonate aldolase (362 aa).

It belongs to the class-I DAHP synthase family.

The enzyme catalyses D-erythrose 4-phosphate + phosphoenolpyruvate + H2O = 7-phospho-2-dehydro-3-deoxy-D-arabino-heptonate + phosphate. The protein operates within metabolic intermediate biosynthesis; chorismate biosynthesis; chorismate from D-erythrose 4-phosphate and phosphoenolpyruvate: step 1/7. Its function is as follows. Stereospecific condensation of phosphoenolpyruvate (PEP) and D-erythrose-4-phosphate (E4P) giving rise to 3-deoxy-D-arabino-heptulosonate-7-phosphate (DAHP). This is Phospho-2-dehydro-3-deoxyheptonate aldolase (aroG) from Haemophilus influenzae (strain ATCC 51907 / DSM 11121 / KW20 / Rd).